The primary structure comprises 617 residues: Probable LRR receptor-like serine/threonine-protein kinase RKF3 (617 aa).

The signal sequence occupies residues 1–20; it reads MLFLRRIAVVFFVFTSFSAA. Residues 21-212 lie on the Extracellular side of the membrane; the sequence is QNSTCPLDFS…PTSSGANKVK (192 aa). 4 N-linked (GlcNAc...) asparagine glycosylation sites follow: N22, N124, N135, and N165. A helical transmembrane segment spans residues 213–233; that stretch reads VLVSSFSVLLVASVLVITAWF. Topologically, residues 234 to 617 are cytoplasmic; it reads WYCRRKKSKL…DGPSGNTNTT (384 aa). Residues 283–563 form the Protein kinase domain; it reads FSRHNIIGRG…VKMLESNEFT (281 aa). Residues 289–297 and K311 contribute to the ATP site; that span reads IGRGGYGNV. The active-site Proton acceptor is the D412. Residues 585 to 617 are disordered; that stretch reads VSSSSGSGKLTSPTGYQAFSFGGDGPSGNTNTT.

The protein belongs to the protein kinase superfamily. Ser/Thr protein kinase family. Expressed in the whole plant at low levels.

It localises to the cell membrane. The catalysed reaction is L-seryl-[protein] + ATP = O-phospho-L-seryl-[protein] + ADP + H(+). It carries out the reaction L-threonyl-[protein] + ATP = O-phospho-L-threonyl-[protein] + ADP + H(+). The chain is Probable LRR receptor-like serine/threonine-protein kinase RKF3 (RKF3) from Arabidopsis thaliana (Mouse-ear cress).